We begin with the raw amino-acid sequence, 562 residues long: Alpha-amylase 2 (562 aa).

Asn-236 contributes to the Ca(2+) binding site. Catalysis depends on Asp-309, which acts as the Nucleophile. Glu-338 (proton donor) is an active-site residue.

This sequence belongs to the glycosyl hydrolase 13 family. Monomer. Requires Ca(2+) as cofactor.

The protein resides in the cytoplasm. It catalyses the reaction Endohydrolysis of (1-&gt;4)-alpha-D-glucosidic linkages in polysaccharides containing three or more (1-&gt;4)-alpha-linked D-glucose units.. This Dictyoglomus thermophilum (strain ATCC 35947 / DSM 3960 / H-6-12) protein is Alpha-amylase 2 (amyB).